The following is a 56-amino-acid chain: Large ribosomal subunit protein bL33 (56 aa).

It belongs to the bacterial ribosomal protein bL33 family.

This chain is Large ribosomal subunit protein bL33, found in Histophilus somni (strain 129Pt) (Haemophilus somnus).